The following is a 269-amino-acid chain: 15-hydroxyprostaglandin dehydrogenase [NAD(+)] (269 aa).

Residues G12 to A20, D36 to W37, C63 to V65, and N91 each bind NAD(+). S138 and Q148 together coordinate substrate. Y151 functions as the Proton acceptor in the catalytic mechanism. Residues Y151 to K155 and V186 to T188 contribute to the NAD(+) site.

Belongs to the short-chain dehydrogenases/reductases (SDR) family. In terms of assembly, homodimer. Expressed in proximal convoluted tubules of the kidney, where it colocalizes with the prostaglandin transporter SLC22A22 (at protein level). Expressed in lung, intestine, stomach and liver.

It is found in the cytoplasm. It carries out the reaction prostaglandin E2 + NAD(+) = 15-oxoprostaglandin E2 + NADH + H(+). The enzyme catalyses (15S)-hydroxy-(5Z,8Z,11Z,13E)-eicosatetraenoate + NAD(+) = 15-oxo-(5Z,8Z,11Z,13E)-eicosatetraenoate + NADH + H(+). It catalyses the reaction (11R)-hydroxy-(5Z,8Z,12E,14Z)-eicosatetraenoate + NAD(+) = 11-oxo-(5Z,8Z,12E,14Z)-eicosatetraenoate + NADH + H(+). The catalysed reaction is lipoxin A4 + NAD(+) = 15-oxo-(5S,6R)-dihydroxy-(7E,9E,11Z,13E)-eicosatetraenoate + NADH + H(+). It carries out the reaction 15-oxo-(5S,6R)-dihydroxy-(7E,9E,11Z)-eicosatrienoate + NADH + H(+) = (5S,6R,15S)-trihydroxy-(7E,9E,11Z)-eicosatrienoate + NAD(+). The enzyme catalyses prostaglandin A1 + NAD(+) = 15-oxo-prostaglandin A1 + NADH + H(+). It catalyses the reaction prostaglandin E1 + NAD(+) = 15-oxoprostaglandin E1 + NADH + H(+). The catalysed reaction is 14-hydroxy-(4Z,7Z,10Z,12E,16Z,19Z)-docosahexaenoate + NAD(+) = 14-oxo-(4Z,7Z,10Z,12E,16Z,19Z)-docosahexaenoate + NADH + H(+). It carries out the reaction resolvin E1 + NAD(+) = 18-oxo-resolvin E1 + NADH + H(+). The enzyme catalyses resolvin D1 + NAD(+) = 8-oxoresolvin D1 + NADH + H(+). It catalyses the reaction resolvin D1 + NAD(+) = 17-oxoresolvin D1 + NADH + H(+). The catalysed reaction is resolvin D2 + NAD(+) = 7-oxoresolvin D2 + NADH + H(+). It carries out the reaction resolvin D2 + NAD(+) = 16-oxoresolvin D2 + NADH + H(+). Catalyzes the NAD-dependent dehydrogenation (oxidation) of a broad array of hydroxylated polyunsaturated fatty acids (mainly eicosanoids and docosanoids, including prostaglandins, lipoxins and resolvins), yielding their corresponding keto (oxo) metabolites. Decreases the levels of the pro-proliferative prostaglandins such as prostaglandin E2 (whose activity is increased in cancer because of an increase in the expression of cyclooxygenase 2) and generates oxo-fatty acid products that can profoundly influence cell function by abrogating pro-inflammatory cytokine expression. Converts resolvins E1, D1 and D2 to their oxo products, which represents a mode of resolvin inactivation. Resolvin E1 plays important roles during the resolution phase of acute inflammation, while resolvins D1 and D2 have a unique role in obesity-induced adipose inflammation. In Mus musculus (Mouse), this protein is 15-hydroxyprostaglandin dehydrogenase [NAD(+)] (Hpgd).